Consider the following 263-residue polypeptide: PDZ domain-containing protein 9 (263 aa).

The PDZ domain maps to 30 to 109; sequence QTKLTVGSMG…GTILQIKVYR (80 aa).

The protein is PDZ domain-containing protein 9 (PDZD9) of Bos taurus (Bovine).